We begin with the raw amino-acid sequence, 582 residues long: MLRTHTCGELRLQHIGISVTLCGWVQKIRNKGSLVWIDLRDRYGITQLILEEHITAPEILSQVQHIGREYVIQATGSVIERSAKNPSMPTGDIEIEVKSLTILNTAKTPPFLIEEQTDGGEELRMQYRYLDLRRPPLQKNLLLRQLVAQHARAYLEQHHFVDVETPLLIKSTPGGARDFVVPSRIHPQQFYALPQSPQIFKQLLMVAGLDRYYQIAKCFRDEDFRADRQPEFTQIDCELSFVTQADILHIFENFTKYIFEATIQVRLDKFPCITYAEAMQKYGTDKPDIRFGMRLIELTELVKNSEFPLFKQAKLIAGICVKGCADYTRKQLDDLTEYIKKLNLVTSGLVYVKYLADGSFNSPVSKFYDVEQLTLWAKQMHAVPGDLLLILAGEIEATQIALGSLRLKLRDELHLVSKDKFAPLWVVDFPLLEWNEESQRYVSRHHPFTSPKQEDIELLSTKPETVRANAYDLVINGMEIGGGSIRIHDRALQEQIFNVLGFSEEEARQQFGFLTDAFEYGAPPHGGIAFGFDRLCAIIGREDSIRPFIAFPKNNAGRDVMMKAPSTITEQQISELGIILSK.

Positions 198-201 (QIFK) are aspartate. An L-aspartate-binding site is contributed by Arg-220. Residues 220–222 (RDE) and Gln-229 each bind ATP. His-445 contacts L-aspartate. Glu-479 is a binding site for ATP. Residue Arg-486 participates in L-aspartate binding. An ATP-binding site is contributed by 531 to 534 (GFDR).

Belongs to the class-II aminoacyl-tRNA synthetase family. Type 1 subfamily. Homodimer.

It localises to the cytoplasm. The enzyme catalyses tRNA(Asp) + L-aspartate + ATP = L-aspartyl-tRNA(Asp) + AMP + diphosphate. In terms of biological role, catalyzes the attachment of L-aspartate to tRNA(Asp) in a two-step reaction: L-aspartate is first activated by ATP to form Asp-AMP and then transferred to the acceptor end of tRNA(Asp). The sequence is that of Aspartate--tRNA ligase from Amoebophilus asiaticus (strain 5a2).